The primary structure comprises 195 residues: Putative manganese efflux pump MntP (195 aa).

Transmembrane regions (helical) follow at residues 4-24, 39-59, 64-84, 120-140, 145-165, and 175-195; these read ILIT…SLAM, FVLT…NLGL, FLGV…GWQM, ILLL…TLGT, ILIT…VGFA, and GSYA…KFVV.

It belongs to the MntP (TC 9.B.29) family.

It is found in the cell membrane. Functionally, probably functions as a manganese efflux pump. This Syntrophomonas wolfei subsp. wolfei (strain DSM 2245B / Goettingen) protein is Putative manganese efflux pump MntP.